A 197-amino-acid chain; its full sequence is FMN-dependent NADH:quinone oxidoreductase (197 aa).

FMN contacts are provided by residues S10 and 17-19 (SFS).

This sequence belongs to the azoreductase type 1 family. Homodimer. The cofactor is FMN.

The enzyme catalyses 2 a quinone + NADH + H(+) = 2 a 1,4-benzosemiquinone + NAD(+). It carries out the reaction N,N-dimethyl-1,4-phenylenediamine + anthranilate + 2 NAD(+) = 2-(4-dimethylaminophenyl)diazenylbenzoate + 2 NADH + 2 H(+). In terms of biological role, quinone reductase that provides resistance to thiol-specific stress caused by electrophilic quinones. Functionally, also exhibits azoreductase activity. Catalyzes the reductive cleavage of the azo bond in aromatic azo compounds to the corresponding amines. In Mycoplasmoides gallisepticum (strain R(low / passage 15 / clone 2)) (Mycoplasma gallisepticum), this protein is FMN-dependent NADH:quinone oxidoreductase.